The primary structure comprises 251 residues: Ubiquinone biosynthesis O-methyltransferase (251 aa).

4 residues coordinate S-adenosyl-L-methionine: R36, G61, D82, and I124.

This sequence belongs to the methyltransferase superfamily. UbiG/COQ3 family.

It catalyses the reaction a 3-demethylubiquinol + S-adenosyl-L-methionine = a ubiquinol + S-adenosyl-L-homocysteine + H(+). The enzyme catalyses a 3-(all-trans-polyprenyl)benzene-1,2-diol + S-adenosyl-L-methionine = a 2-methoxy-6-(all-trans-polyprenyl)phenol + S-adenosyl-L-homocysteine + H(+). It functions in the pathway cofactor biosynthesis; ubiquinone biosynthesis. Its function is as follows. O-methyltransferase that catalyzes the 2 O-methylation steps in the ubiquinone biosynthetic pathway. The protein is Ubiquinone biosynthesis O-methyltransferase of Rickettsia akari (strain Hartford).